A 106-amino-acid polypeptide reads, in one-letter code: 3-oxoacyl-[acyl-carrier-protein] reductase (106 aa).

It belongs to the short-chain dehydrogenases/reductases (SDR) family. Homotetramer. Mesocarp.

The protein resides in the plastid. It localises to the chloroplast. The catalysed reaction is a (3R)-hydroxyacyl-[ACP] + NADP(+) = a 3-oxoacyl-[ACP] + NADPH + H(+). Its pathway is lipid metabolism; fatty acid biosynthesis. The protein is 3-oxoacyl-[acyl-carrier-protein] reductase of Persea americana (Avocado).